The following is a 243-amino-acid chain: Tubulin-folding cofactor B (243 aa).

The 43-residue stretch at 181–223 (RAESLGPGYWVGIQYDEPLGKHDGMVKGTRFFECPRLQGGMVR) folds into the CAP-Gly domain.

This sequence belongs to the TBCB family. In terms of assembly, supercomplex made of cofactors A to E. Cofactors A and D function by capturing and stabilizing tubulin in a quasi-native conformation. Cofactor E binds to the cofactor D-tubulin complex; interaction with cofactor C then causes the release of tubulin polypeptides that are committed to the native state. Interacts with TUBA6. As to expression, expressed in roots, stems, leaves, flowers and siliques.

The protein localises to the cytoplasm. Involved in control of cell division. Regulates probably the availability of alpha-tubulin for dimerization of alpha-/beta-tubulin, which is required for proper microtubule biogenesis. Decreased expression of TFCB results in enlarged mesophyll cells and leaf epidermal cells with bulged nuclei, increased ploidy and increased numbers of spindles and phragmoplasts. In Arabidopsis thaliana (Mouse-ear cress), this protein is Tubulin-folding cofactor B (TFCB).